Reading from the N-terminus, the 883-residue chain is Valine--tRNA ligase (883 aa).

Residues 46-56 carry the 'HIGH' region motif; sequence PNVTGKLHLGH. Positions 520-524 match the 'KMSKS' region motif; the sequence is KMSKS. Lys-523 is an ATP binding site. Positions 809–883 form a coiled coil; that stretch reads LADLLNVEEE…RIKEMEKLIK (75 aa).

The protein belongs to the class-I aminoacyl-tRNA synthetase family. ValS type 1 subfamily. As to quaternary structure, monomer.

Its subcellular location is the cytoplasm. The catalysed reaction is tRNA(Val) + L-valine + ATP = L-valyl-tRNA(Val) + AMP + diphosphate. Functionally, catalyzes the attachment of valine to tRNA(Val). As ValRS can inadvertently accommodate and process structurally similar amino acids such as threonine, to avoid such errors, it has a 'posttransfer' editing activity that hydrolyzes mischarged Thr-tRNA(Val) in a tRNA-dependent manner. This chain is Valine--tRNA ligase, found in Streptococcus mutans serotype c (strain ATCC 700610 / UA159).